Consider the following 93-residue polypeptide: Antitoxin RelF (93 aa).

The protein belongs to the phD/YefM antitoxin family. In terms of assembly, interacts with toxin RelG, which neutralizes the toxin. Also interacts with toxins RelE and RelK in vitro, in M.smegmatis coexpression with non-cognate toxins increases the toxicity of RelE but not of RelK.

In terms of biological role, antitoxin component of a type II toxin-antitoxin (TA) system. Upon expression in M.smegmatis neutralizes the effect of toxin RelE2. Functionally, induces its own promoter, in combination with RelG represses its own promoter. Has been seen to bind DNA in complex with toxin RelG but not alone. The polypeptide is Antitoxin RelF (relF) (Mycobacterium tuberculosis (strain ATCC 25618 / H37Rv)).